We begin with the raw amino-acid sequence, 291 residues long: tRNA dimethylallyltransferase (291 aa).

Residue 11–18 (GPTASGKS) coordinates ATP. Residue 13 to 18 (TASGKS) coordinates substrate. Residues 42 to 45 (DSMQ) form an interaction with substrate tRNA region.

The protein belongs to the IPP transferase family. Monomer. Mg(2+) is required as a cofactor.

The catalysed reaction is adenosine(37) in tRNA + dimethylallyl diphosphate = N(6)-dimethylallyladenosine(37) in tRNA + diphosphate. Its function is as follows. Catalyzes the transfer of a dimethylallyl group onto the adenine at position 37 in tRNAs that read codons beginning with uridine, leading to the formation of N6-(dimethylallyl)adenosine (i(6)A). This chain is tRNA dimethylallyltransferase, found in Rubrobacter xylanophilus (strain DSM 9941 / JCM 11954 / NBRC 16129 / PRD-1).